Here is a 334-residue protein sequence, read N- to C-terminus: Protein-methionine-sulfoxide reductase catalytic subunit MsrP (334 aa).

A signal peptide (tat-type signal) is located at residues 1–44; that stretch reads MKKIRPLTEADVTAESAFFMQRRQVLKALGISAAALSLPSTAQA. Residues Asn-88, 91-92, Cys-146, Thr-181, Asn-233, Arg-238, and 249-251 each bind Mo-molybdopterin; these read YE and GIK.

Belongs to the MsrP family. In terms of assembly, heterodimer of a catalytic subunit (MsrP) and a heme-binding subunit (MsrQ). Mo-molybdopterin is required as a cofactor. In terms of processing, predicted to be exported by the Tat system. The position of the signal peptide cleavage has not been experimentally proven.

It is found in the periplasm. The enzyme catalyses L-methionyl-[protein] + a quinone + H2O = L-methionyl-(S)-S-oxide-[protein] + a quinol. It catalyses the reaction L-methionyl-[protein] + a quinone + H2O = L-methionyl-(R)-S-oxide-[protein] + a quinol. Part of the MsrPQ system that repairs oxidized periplasmic proteins containing methionine sulfoxide residues (Met-O), using respiratory chain electrons. Thus protects these proteins from oxidative-stress damage caused by reactive species of oxygen and chlorine generated by the host defense mechanisms. MsrPQ is essential for the maintenance of envelope integrity under bleach stress, rescuing a wide series of structurally unrelated periplasmic proteins from methionine oxidation, including the primary periplasmic chaperone SurA and the lipoprotein Pal. The catalytic subunit MsrP is non-stereospecific, being able to reduce both (R-) and (S-) diastereoisomers of methionine sulfoxide. This chain is Protein-methionine-sulfoxide reductase catalytic subunit MsrP, found in Salmonella agona (strain SL483).